Consider the following 150-residue polypeptide: Small ribosomal subunit protein uS11 (150 aa).

The interval 126-150 (GRIEDVTPTPSDSTRRKGGRRGRRL) is disordered. A compositionally biased stretch (basic residues) spans 141 to 150 (RKGGRRGRRL).

The protein belongs to the universal ribosomal protein uS11 family. In terms of assembly, component of the small ribosomal subunit (SSU). Mature N.crassa ribosomes consist of a small (40S) and a large (60S) subunit. The 40S small subunit contains 1 molecule of ribosomal RNA (18S rRNA) and at least 32 different proteins. The large 60S subunit contains 3 rRNA molecules (26S, 5.8S and 5S rRNA) and at least 42 different proteins.

It is found in the cytoplasm. Component of the ribosome, a large ribonucleoprotein complex responsible for the synthesis of proteins in the cell. The small ribosomal subunit (SSU) binds messenger RNAs (mRNAs) and translates the encoded message by selecting cognate aminoacyl-transfer RNA (tRNA) molecules. The large subunit (LSU) contains the ribosomal catalytic site termed the peptidyl transferase center (PTC), which catalyzes the formation of peptide bonds, thereby polymerizing the amino acids delivered by tRNAs into a polypeptide chain. The nascent polypeptides leave the ribosome through a tunnel in the LSU and interact with protein factors that function in enzymatic processing, targeting, and the membrane insertion of nascent chains at the exit of the ribosomal tunnel. uS11 is involved in nucleolar processing of pre-18S ribosomal RNA and ribosome assembly. This Neurospora crassa (strain ATCC 24698 / 74-OR23-1A / CBS 708.71 / DSM 1257 / FGSC 987) protein is Small ribosomal subunit protein uS11 (rps-14).